A 181-amino-acid polypeptide reads, in one-letter code: Endoribonuclease YbeY (181 aa).

Zn(2+) contacts are provided by His115, His119, and His125.

It belongs to the endoribonuclease YbeY family. Zn(2+) is required as a cofactor.

Its subcellular location is the cytoplasm. In terms of biological role, single strand-specific metallo-endoribonuclease involved in late-stage 70S ribosome quality control and in maturation of the 3' terminus of the 16S rRNA. The protein is Endoribonuclease YbeY of Bifidobacterium animalis subsp. lactis (strain AD011).